Consider the following 557-residue polypeptide: Formate--tetrahydrofolate ligase (557 aa).

67 to 74 (TPAGEGKT) is an ATP binding site.

Belongs to the formate--tetrahydrofolate ligase family.

It carries out the reaction (6S)-5,6,7,8-tetrahydrofolate + formate + ATP = (6R)-10-formyltetrahydrofolate + ADP + phosphate. It participates in one-carbon metabolism; tetrahydrofolate interconversion. The sequence is that of Formate--tetrahydrofolate ligase from Cereibacter sphaeroides (strain ATCC 17025 / ATH 2.4.3) (Rhodobacter sphaeroides).